We begin with the raw amino-acid sequence, 244 residues long: Glycoprotein 3 (244 aa).

Although P4 acquires its capsid proteins from helper phages such as P2, it possesses the ability to assemble capsids that are only one-third the size of the helper's capsid. The sid protein is responsible for the assembly of P4-sized shells. It forms a P4-specific scaffold with icosahedral symmetry on the outside of the procapsid-like particles. The chain is Glycoprotein 3 (sid) from Enterobacteria phage P4 (Bacteriophage P4).